The sequence spans 665 residues: Protein-arginine deiminase type-2 (665 aa).

Ca(2+) contacts are provided by D123, D125, D127, E131, N154, D156, D158, D166, D169, K171, D177, D180, E354, D389, F408, L411, and E412. The active-site Nucleophile is C647.

Belongs to the protein arginine deiminase family. In terms of assembly, homodimer. Requires Ca(2+) as cofactor. In terms of tissue distribution, spinal cord, submaxillary gland, cerebrum, cerebellum, and skeletal muscle.

It localises to the cytoplasm. The enzyme catalyses L-arginyl-[protein] + H2O = L-citrullyl-[protein] + NH4(+). In terms of biological role, catalyzes the deimination of arginine residues of proteins. This is Protein-arginine deiminase type-2 (Padi2) from Rattus norvegicus (Rat).